The following is a 390-amino-acid chain: Probable tRNA pseudouridine synthase D (390 aa).

Residue aspartate 93 is the Nucleophile of the active site. The 188-residue stretch at 166 to 353 folds into the TRUD domain; the sequence is YVLNYYGIQR…YGTRRKMITP (188 aa).

It belongs to the pseudouridine synthase TruD family.

It carries out the reaction uridine(13) in tRNA = pseudouridine(13) in tRNA. Its function is as follows. Could be responsible for synthesis of pseudouridine from uracil-13 in transfer RNAs. The chain is Probable tRNA pseudouridine synthase D from Methanococcus maripaludis (strain C5 / ATCC BAA-1333).